The following is a 244-amino-acid chain: tRNA pseudouridine synthase A 2 (244 aa).

Asp-52 serves as the catalytic Nucleophile. Tyr-110 contacts substrate.

The protein belongs to the tRNA pseudouridine synthase TruA family. In terms of assembly, homodimer.

The catalysed reaction is uridine(38/39/40) in tRNA = pseudouridine(38/39/40) in tRNA. Formation of pseudouridine at positions 38, 39 and 40 in the anticodon stem and loop of transfer RNAs. This chain is tRNA pseudouridine synthase A 2, found in Clostridium perfringens (strain 13 / Type A).